Reading from the N-terminus, the 326-residue chain is Aquaporin-3 (326 aa).

A run of 2 helical transmembrane segments spans residues 24-44 (LAEF…IITA) and 64-84 (LAFG…GISG). An NPA 1 motif is present at residues 88 to 90 (NPA). A helical transmembrane segment spans residues 107–127 (LVYIFMQYMGAFFAASILYAV). N146 is a glycosylation site (N-linked (GlcNAc...) asparagine). 2 consecutive transmembrane segments (helical) span residues 166–186 (IFDA…IIDP) and 196–216 (IPLY…YNAG). An NPA 2 motif is present at residues 220-222 (NPA). Residues 247–267 (LWWLVPVIGPHVGGLLGGVTY) traverse the membrane as a helical segment. The N-linked (GlcNAc...) asparagine glycan is linked to N294.

Belongs to the MIP/aquaporin (TC 1.A.8) family.

It is found in the cell membrane. Aquaglyceroporin that may modulate the water content and osmolytes during anhydrobiosis. In Milnesium tardigradum (Water bear), this protein is Aquaporin-3.